The following is a 198-amino-acid chain: Chitin synthase 2 (198 aa).

The protein belongs to the chitin synthase family. Class III subfamily.

It localises to the cell membrane. It carries out the reaction [(1-&gt;4)-N-acetyl-beta-D-glucosaminyl](n) + UDP-N-acetyl-alpha-D-glucosamine = [(1-&gt;4)-N-acetyl-beta-D-glucosaminyl](n+1) + UDP + H(+). Its function is as follows. Polymerizes chitin, a structural polymer of the cell wall and septum, by transferring the sugar moiety of UDP-GlcNAc to the non-reducing end of the growing chitin polymer. This Rhinocladiella atrovirens protein is Chitin synthase 2 (CHS2).